The following is a 123-amino-acid chain: Small ribosomal subunit protein uS12 (123 aa).

Aspartate 89 bears the 3-methylthioaspartic acid mark.

It belongs to the universal ribosomal protein uS12 family. Part of the 30S ribosomal subunit. Contacts proteins S8 and S17. May interact with IF1 in the 30S initiation complex.

Functionally, with S4 and S5 plays an important role in translational accuracy. In terms of biological role, interacts with and stabilizes bases of the 16S rRNA that are involved in tRNA selection in the A site and with the mRNA backbone. Located at the interface of the 30S and 50S subunits, it traverses the body of the 30S subunit contacting proteins on the other side and probably holding the rRNA structure together. The combined cluster of proteins S8, S12 and S17 appears to hold together the shoulder and platform of the 30S subunit. This chain is Small ribosomal subunit protein uS12, found in Gluconobacter oxydans (strain 621H) (Gluconobacter suboxydans).